Here is a 256-residue protein sequence, read N- to C-terminus: Cell division protein ZipA (256 aa).

The Periplasmic portion of the chain corresponds to 1-6; sequence MQYGRQ. Residues 7–27 form a helical membrane-spanning segment; the sequence is ILICIGILTVIILLLYGLLNS. Topologically, residues 28–256 are cytoplasmic; sequence YWDRTVTFCK…RHVLSANKST (229 aa).

Belongs to the ZipA family. In terms of assembly, interacts with FtsZ via their C-terminal domains.

It localises to the cell inner membrane. In terms of biological role, essential cell division protein that stabilizes the FtsZ protofilaments by cross-linking them and that serves as a cytoplasmic membrane anchor for the Z ring. Also required for the recruitment to the septal ring of downstream cell division proteins. This Baumannia cicadellinicola subsp. Homalodisca coagulata protein is Cell division protein ZipA.